A 486-amino-acid chain; its full sequence is N-succinylglutamate 5-semialdehyde dehydrogenase (486 aa).

220–225 serves as a coordination point for NAD(+); it reads GSSRTG. Residues E243 and C277 contribute to the active site.

It belongs to the aldehyde dehydrogenase family. AstD subfamily.

It carries out the reaction N-succinyl-L-glutamate 5-semialdehyde + NAD(+) + H2O = N-succinyl-L-glutamate + NADH + 2 H(+). Its pathway is amino-acid degradation; L-arginine degradation via AST pathway; L-glutamate and succinate from L-arginine: step 4/5. In terms of biological role, catalyzes the NAD-dependent reduction of succinylglutamate semialdehyde into succinylglutamate. The polypeptide is N-succinylglutamate 5-semialdehyde dehydrogenase (Shewanella baltica (strain OS155 / ATCC BAA-1091)).